Reading from the N-terminus, the 856-residue chain is Translation initiation factor IF-2 (856 aa).

The tr-type G domain occupies 356–526 (PRAPVVTVMG…LLIADLLELK (171 aa)). The G1 stretch occupies residues 365 to 372 (GHVDHGKT). 365–372 (GHVDHGKT) contacts GTP. The interval 390-394 (GITQH) is G2. Residues 412–415 (DTPG) form a G3 region. GTP is bound by residues 412–416 (DTPGH) and 466–469 (NKID). The interval 466–469 (NKID) is G4. Residues 502 to 504 (SAK) are G5.

This sequence belongs to the TRAFAC class translation factor GTPase superfamily. Classic translation factor GTPase family. IF-2 subfamily.

The protein localises to the cytoplasm. Functionally, one of the essential components for the initiation of protein synthesis. Protects formylmethionyl-tRNA from spontaneous hydrolysis and promotes its binding to the 30S ribosomal subunits. Also involved in the hydrolysis of GTP during the formation of the 70S ribosomal complex. The sequence is that of Translation initiation factor IF-2 from Ehrlichia ruminantium (strain Gardel).